The chain runs to 88 residues: Small ribosomal subunit protein bS16 (88 aa).

This sequence belongs to the bacterial ribosomal protein bS16 family.

The sequence is that of Small ribosomal subunit protein bS16 from Mycoplasma pneumoniae (strain ATCC 29342 / M129 / Subtype 1) (Mycoplasmoides pneumoniae).